The primary structure comprises 201 residues: MEWVWALVVLAALGSAGAERDCRVSSFRVKENFDKARFSGTWYAMAKKDPEGLFLQDNIVAEFSVDEYGQMSATAKGRVRLLNNWDVCADMVGTFTDTEDPAKFKMKYWGVASFLQKGNDDHWIIDTDYDTYAVQYSCRLLNLDGTCADSYSFVFARDPNGFPPEVQRIVRRRQEELCLARQYRLISHNGYCDGKSDRNLL.

Positions 1-18 (MEWVWALVVLAALGSAGA) are cleaved as a signal peptide. 3 cysteine pairs are disulfide-bonded: Cys22–Cys178, Cys88–Cys192, and Cys138–Cys147. Gln116 is a substrate binding site. Arg139 is modified (omega-N-methylarginine).

Belongs to the calycin superfamily. Lipocalin family. Interacts with TTR. Interaction with TTR prevents its loss by filtration through the kidney glomeruli. Interacts with STRA6.

The protein localises to the secreted. Functionally, retinol-binding protein that mediates retinol transport in blood plasma. Delivers retinol from the liver stores to the peripheral tissues. Transfers the bound all-trans retinol to STRA6, that then facilitates retinol transport across the cell membrane. This Equus caballus (Horse) protein is Retinol-binding protein 4 (RBP4).